The sequence spans 201 residues: Small ribosomal subunit protein uS4c (201 aa).

The S4 RNA-binding domain maps to 89 to 149 (MRLDNILFRL…DKPKSGALIK (61 aa)).

This sequence belongs to the universal ribosomal protein uS4 family. Part of the 30S ribosomal subunit. Contacts protein S5. The interaction surface between S4 and S5 is involved in control of translational fidelity.

The protein resides in the plastid. Its function is as follows. One of the primary rRNA binding proteins, it binds directly to 16S rRNA where it nucleates assembly of the body of the 30S subunit. In terms of biological role, with S5 and S12 plays an important role in translational accuracy. This is Small ribosomal subunit protein uS4c (rps4) from Cuscuta exaltata (Tall dodder).